Reading from the N-terminus, the 485-residue chain is Glutamyl-tRNA(Gln) amidotransferase subunit A (485 aa).

Catalysis depends on charge relay system residues K79 and S154. S178 acts as the Acyl-ester intermediate in catalysis.

Belongs to the amidase family. GatA subfamily. Heterotrimer of A, B and C subunits.

It catalyses the reaction L-glutamyl-tRNA(Gln) + L-glutamine + ATP + H2O = L-glutaminyl-tRNA(Gln) + L-glutamate + ADP + phosphate + H(+). Allows the formation of correctly charged Gln-tRNA(Gln) through the transamidation of misacylated Glu-tRNA(Gln) in organisms which lack glutaminyl-tRNA synthetase. The reaction takes place in the presence of glutamine and ATP through an activated gamma-phospho-Glu-tRNA(Gln). In Staphylococcus aureus (strain MW2), this protein is Glutamyl-tRNA(Gln) amidotransferase subunit A.